A 165-amino-acid polypeptide reads, in one-letter code: Short form salivary protein D7R4 (165 aa).

A signal peptide spans 1–21 (MIRQVITSYFLTVCLLALVQG). Disulfide bonds link cysteine 27–cysteine 59, cysteine 40–cysteine 165, and cysteine 98–cysteine 117. Residues glutamate 28 and arginine 43 each contribute to the noradrenaline site. Residue glutamate 28 coordinates serotonin. Serotonin-binding residues include histidine 56, tyrosine 115, aspartate 132, and glutamate 135. Residues tyrosine 115, aspartate 132, and glutamate 135 each coordinate histamine. 3 residues coordinate tryptamine: tyrosine 115, aspartate 132, and glutamate 135. Noradrenaline-binding residues include aspartate 132 and glutamate 135.

This sequence belongs to the PBP/GOBP family. In terms of tissue distribution, female saliva (at protein level). Female salivary gland. Not detected in female carcass without salivary glands. Not detected in male tissues.

It localises to the secreted. Modulates blood feeding of female mosquitoes on vertebrate species by binding and sequestering different mediators involved in the host response. Binds serotonin, noradrenaline, histamine and tryptamine. Inhibits histamine-, serotonin- and partially noradrenaline-induced smooth muscle contraction. Exhibits vasodilating activity. This chain is Short form salivary protein D7R4, found in Anopheles gambiae (African malaria mosquito).